Here is a 410-residue protein sequence, read N- to C-terminus: MLQKPRGTRDFLPDEMERRRLIERRMRDAARRWGYREVCTPDFEHLELFTMKSGEGIIQEMYVFEDKGGRKMTLRPEVTAAVLRMYVNEGKVLPKPLRWCYFADCFRYERPQKGRYRQFWQFGVELIGADTASADAEVIMLADDTLRSTGVTFDLHVGHLAPMKHLLSGLDPGDQRAIMAYLDKHDQKGLEAVLFGKNLTHLAEPLAALGECRTVSEVFEVAGDVPERARIEETFTLLESQEIDYRPDFGIARGLDYYTGMVFEGFAKNLGAENQILGGGTYRLAHLFGGDDVASCGFAIGFDRVMVSIGDFELAHEPVVGVVCTPEGRARALEVARAFREAGVRAEADLMQRGMGAQVSHAAKTADFAAVLGKREVEAGTVTLKNLHSGEQQERSLEEAIAEVARHGAC.

The protein belongs to the class-II aminoacyl-tRNA synthetase family.

It is found in the cytoplasm. The catalysed reaction is tRNA(His) + L-histidine + ATP = L-histidyl-tRNA(His) + AMP + diphosphate + H(+). This Methanoculleus marisnigri (strain ATCC 35101 / DSM 1498 / JR1) protein is Histidine--tRNA ligase.